A 662-amino-acid polypeptide reads, in one-letter code: Bifunctional polymyxin resistance protein ArnA (662 aa).

The tract at residues 1-307 (MTSKAVVFAY…ELGLVEGARL (307 aa)) is formyltransferase ArnAFT. The active-site Proton donor; for formyltransferase activity is the His-106. Residues Arg-116 and 138–142 (VERAD) contribute to the (6R)-10-formyltetrahydrofolate site. The interval 316–662 (RRTRVLILGV…EALREREAQA (347 aa)) is dehydrogenase ArnADH. NAD(+) contacts are provided by residues Asp-349 and 370-371 (DI). UDP-alpha-D-glucuronate is bound by residues Ala-395, Tyr-400, and 434 to 435 (TS). The active-site Proton acceptor; for decarboxylase activity is Glu-436. Residues Arg-462, Asn-493, 527–536 (RLVDGGAQKR), and Tyr-614 each bind UDP-alpha-D-glucuronate. Catalysis depends on Arg-620, which acts as the Proton donor; for decarboxylase activity.

The protein in the N-terminal section; belongs to the Fmt family. UDP-L-Ara4N formyltransferase subfamily. This sequence in the C-terminal section; belongs to the NAD(P)-dependent epimerase/dehydratase family. UDP-glucuronic acid decarboxylase subfamily. In terms of assembly, homohexamer, formed by a dimer of trimers.

It catalyses the reaction UDP-alpha-D-glucuronate + NAD(+) = UDP-beta-L-threo-pentopyranos-4-ulose + CO2 + NADH. The catalysed reaction is UDP-4-amino-4-deoxy-beta-L-arabinose + (6R)-10-formyltetrahydrofolate = UDP-4-deoxy-4-formamido-beta-L-arabinose + (6S)-5,6,7,8-tetrahydrofolate + H(+). The protein operates within nucleotide-sugar biosynthesis; UDP-4-deoxy-4-formamido-beta-L-arabinose biosynthesis; UDP-4-deoxy-4-formamido-beta-L-arabinose from UDP-alpha-D-glucuronate: step 1/3. It participates in nucleotide-sugar biosynthesis; UDP-4-deoxy-4-formamido-beta-L-arabinose biosynthesis; UDP-4-deoxy-4-formamido-beta-L-arabinose from UDP-alpha-D-glucuronate: step 3/3. Its pathway is bacterial outer membrane biogenesis; lipopolysaccharide biosynthesis. In terms of biological role, bifunctional enzyme that catalyzes the oxidative decarboxylation of UDP-glucuronic acid (UDP-GlcUA) to UDP-4-keto-arabinose (UDP-Ara4O) and the addition of a formyl group to UDP-4-amino-4-deoxy-L-arabinose (UDP-L-Ara4N) to form UDP-L-4-formamido-arabinose (UDP-L-Ara4FN). The modified arabinose is attached to lipid A and is required for resistance to polymyxin and cationic antimicrobial peptides. The protein is Bifunctional polymyxin resistance protein ArnA of Pseudomonas paraeruginosa (strain DSM 24068 / PA7) (Pseudomonas aeruginosa (strain PA7)).